The primary structure comprises 795 residues: MKFSESWLREWVNPAVSREALSHQITMAGLEVDGVDAVAAEFNGVVIGEVVECGLHPDADKLRVTKVSVGSSELIDIVCGAPNCRQGLKVAVAMVGAVLPGDFKIKKAKLRGMPSEGMLCSYSELGIDIDSDGIIELPLDAPLGTDLREYLKLDDAVIEVDLTANRADCLGMVGLAREVGVLNRQAVTEPQWQAVTPTTDAKVTINVKESAACPRYLGRVVKNVNVKAATPLWMQEKLRRSGIRSIDPIVDITNFVLVEFGQPMHAFDLAKLTGDIQVRLGNGEEKITLLDGSEVTIPSDTLVIADDARPLALAGVFGGEYSGVSDTTQDILLECAFFAPLAIMGKSRRLGLHTDSSHRFERGVDPEMQHKVIDRATRLVLDICGGEAGPVVEAKSDADLPKPAQILLRRSKLDKILGHYVPDSDVVEILERLGFSVVKGEGCWQVITATYRFDMAIEEDLIEEVARIYGYNNIPNVAPIASLRMSDHKETDLSLKRVRSLLVARGFQEAVTYSFVDPKLQNLVHPGEQAMVLPNPISSEMSAMRLSMFTGLLTAVGYNQSRQQGRVRLFETGLRFVPDINAESGVRQQAMLGCVITGPQNDEHWAMESKTVDFFDLKGDLEAIIGLTVSASEFSFRVATHSALHPGQCAEILRNDRVIGHIGAIHPSLEKPFGLNGKTIVFELELDALLHTSLPLAQAVSKFPANRRDIAVVVDESVSAGDVMKLIRKVGENQLVGINLFDVYLGKGVEPGKKSLAIALTLQDTTRTLEEKEIAETVESVVSALKTEFNASLRD.

The 110-residue stretch at 39–148 (AAEFNGVVIG…LDAPLGTDLR (110 aa)) folds into the tRNA-binding domain. A B5 domain is found at 401-476 (PKPAQILLRR…RIYGYNNIPN (76 aa)). The Mg(2+) site is built by D454, D460, E463, and E464. One can recognise an FDX-ACB domain in the interval 701-794 (SKFPANRRDI…LKTEFNASLR (94 aa)).

It belongs to the phenylalanyl-tRNA synthetase beta subunit family. Type 1 subfamily. In terms of assembly, tetramer of two alpha and two beta subunits. Mg(2+) is required as a cofactor.

Its subcellular location is the cytoplasm. It catalyses the reaction tRNA(Phe) + L-phenylalanine + ATP = L-phenylalanyl-tRNA(Phe) + AMP + diphosphate + H(+). In Shewanella oneidensis (strain ATCC 700550 / JCM 31522 / CIP 106686 / LMG 19005 / NCIMB 14063 / MR-1), this protein is Phenylalanine--tRNA ligase beta subunit.